The sequence spans 208 residues: Small ribosomal subunit protein uS4 (208 aa).

The S4 RNA-binding domain occupies 98–160 (CRLDNVVYRM…AKKQSRIQLA (63 aa)).

This sequence belongs to the universal ribosomal protein uS4 family. As to quaternary structure, part of the 30S ribosomal subunit. Contacts protein S5. The interaction surface between S4 and S5 is involved in control of translational fidelity.

In terms of biological role, one of the primary rRNA binding proteins, it binds directly to 16S rRNA where it nucleates assembly of the body of the 30S subunit. Functionally, with S5 and S12 plays an important role in translational accuracy. The sequence is that of Small ribosomal subunit protein uS4 from Ruthia magnifica subsp. Calyptogena magnifica.